Here is an 80-residue protein sequence, read N- to C-terminus: Gamma-conotoxin PnVIIA (80 aa).

A signal peptide spans 1–19 (MEKLTILLLVAAVLMSTQA). Residues 20–43 (QNQEQRQQAKINFLSKRKPSAERW) constitute a propeptide that is removed on maturation. Cystine bridges form between Cys47–Cys61, Cys54–Cys65, and Cys60–Cys70. At Glu59 the chain carries 4-carboxyglutamate. Glu71 is subject to 4-carboxyglutamate. Position 76 is a 4-hydroxyproline (Pro76). Residues 78–80 (FGA) constitute a propeptide that is removed on maturation.

As to expression, expressed by the venom duct.

The protein resides in the secreted. In terms of biological role, gamma-conotoxins may act on voltage-gated non-specific cation pacemaker channels (HCN). Triggers depolarization and firing of action potential bursts in the caudodorsal neurons of lymnaea. This effect is due to activation or enhancement of a slow inward cation current that may underlie endogenous bursting activity of these neurons. The chain is Gamma-conotoxin PnVIIA from Conus pennaceus (Feathered cone).